A 249-amino-acid chain; its full sequence is 3-deoxy-manno-octulosonate cytidylyltransferase (249 aa).

The protein belongs to the KdsB family.

It is found in the cytoplasm. It carries out the reaction 3-deoxy-alpha-D-manno-oct-2-ulosonate + CTP = CMP-3-deoxy-beta-D-manno-octulosonate + diphosphate. It participates in nucleotide-sugar biosynthesis; CMP-3-deoxy-D-manno-octulosonate biosynthesis; CMP-3-deoxy-D-manno-octulosonate from 3-deoxy-D-manno-octulosonate and CTP: step 1/1. It functions in the pathway bacterial outer membrane biogenesis; lipopolysaccharide biosynthesis. Its function is as follows. Activates KDO (a required 8-carbon sugar) for incorporation into bacterial lipopolysaccharide in Gram-negative bacteria. In Aliivibrio salmonicida (strain LFI1238) (Vibrio salmonicida (strain LFI1238)), this protein is 3-deoxy-manno-octulosonate cytidylyltransferase.